Here is a 307-residue protein sequence, read N- to C-terminus: Ribosomal protein uL3 glutamine methyltransferase (307 aa).

It belongs to the protein N5-glutamine methyltransferase family. PrmB subfamily.

It catalyses the reaction L-glutaminyl-[ribosomal protein uL3] + S-adenosyl-L-methionine = N(5)-methyl-L-glutaminyl-[ribosomal protein uL3] + S-adenosyl-L-homocysteine + H(+). In terms of biological role, methylates large ribosomal subunit protein uL3 on a specific glutamine residue. This chain is Ribosomal protein uL3 glutamine methyltransferase, found in Burkholderia pseudomallei (strain K96243).